A 134-amino-acid chain; its full sequence is Small ribosomal subunit protein uS9c (134 aa).

The segment at 105–134 (QGYLTRNPLRKERKKYGLKKARKAPQFSKR) is disordered. Residues 115–134 (KERKKYGLKKARKAPQFSKR) show a composition bias toward basic residues.

The protein belongs to the universal ribosomal protein uS9 family.

It is found in the plastid. It localises to the chloroplast. In Nephroselmis olivacea (Green alga), this protein is Small ribosomal subunit protein uS9c (rps9).